A 186-amino-acid chain; its full sequence is Peptidyl-tRNA hydrolase (186 aa).

Tyrosine 14 lines the tRNA pocket. The active-site Proton acceptor is histidine 19. The tRNA site is built by phenylalanine 65, asparagine 67, and asparagine 113.

The protein belongs to the PTH family. Monomer.

The protein localises to the cytoplasm. The catalysed reaction is an N-acyl-L-alpha-aminoacyl-tRNA + H2O = an N-acyl-L-amino acid + a tRNA + H(+). In terms of biological role, hydrolyzes ribosome-free peptidyl-tRNAs (with 1 or more amino acids incorporated), which drop off the ribosome during protein synthesis, or as a result of ribosome stalling. Catalyzes the release of premature peptidyl moieties from peptidyl-tRNA molecules trapped in stalled 50S ribosomal subunits, and thus maintains levels of free tRNAs and 50S ribosomes. This Limosilactobacillus reuteri (strain DSM 20016) (Lactobacillus reuteri) protein is Peptidyl-tRNA hydrolase.